A 478-amino-acid polypeptide reads, in one-letter code: Cytochrome c-552 (478 aa).

The N-terminal stretch at 1–26 (MARKTLRARRFFSLIFPFFFITSVYA) is a signal peptide. A heme c-binding site is contributed by His-94. Positions 122, 125, and 126 each coordinate heme. 6 residues coordinate heme c: Cys-160, Cys-163, His-164, Cys-209, Cys-212, and His-213. Positions 215, 216, 261, and 263 each coordinate Ca(2+). Tyr-216 contributes to the substrate binding site. A substrate-binding site is contributed by His-264. Residues His-275, Cys-282, Cys-285, His-286, His-301, Cys-314, Cys-317, His-318, and His-393 each contribute to the heme c site.

This sequence belongs to the cytochrome c-552 family. Ca(2+) serves as cofactor. The cofactor is heme c.

It localises to the periplasm. It catalyses the reaction 6 Fe(III)-[cytochrome c] + NH4(+) + 2 H2O = 6 Fe(II)-[cytochrome c] + nitrite + 8 H(+). It participates in nitrogen metabolism; nitrate reduction (assimilation). Catalyzes the reduction of nitrite to ammonia, consuming six electrons in the process. In Salmonella agona (strain SL483), this protein is Cytochrome c-552.